Here is a 242-residue protein sequence, read N- to C-terminus: Uridylate kinase (242 aa).

Residue 16 to 19 (KISG) coordinates ATP. The tract at residues 24-29 (GDQGFG) is involved in allosteric activation by GTP. G58 is a UMP binding site. Residues G59 and R63 each contribute to the ATP site. UMP-binding positions include D78 and 139-146 (TGNPYFTT). T166, Y172, and D175 together coordinate ATP.

It belongs to the UMP kinase family. Homohexamer.

Its subcellular location is the cytoplasm. It carries out the reaction UMP + ATP = UDP + ADP. Its pathway is pyrimidine metabolism; CTP biosynthesis via de novo pathway; UDP from UMP (UMPK route): step 1/1. With respect to regulation, allosterically activated by GTP. Inhibited by UTP. Catalyzes the reversible phosphorylation of UMP to UDP. This is Uridylate kinase from Roseobacter denitrificans (strain ATCC 33942 / OCh 114) (Erythrobacter sp. (strain OCh 114)).